The sequence spans 92 residues: Acylphosphatase (92 aa).

The 88-residue stretch at 5-92 folds into the Acylphosphatase-like domain; it reads RAHVFISGRV…GKEGIFTIVW (88 aa). Residues R20 and N38 contribute to the active site.

The protein belongs to the acylphosphatase family.

It carries out the reaction an acyl phosphate + H2O = a carboxylate + phosphate + H(+). The chain is Acylphosphatase (acyP) from Chloroflexus aurantiacus (strain ATCC 29366 / DSM 635 / J-10-fl).